Reading from the N-terminus, the 488-residue chain is Ribulose bisphosphate carboxylase large chain (488 aa).

Residues asparagine 127 and threonine 177 each contribute to the substrate site. Lysine 179 serves as the catalytic Proton acceptor. Residue lysine 181 coordinates substrate. Residues lysine 205, aspartate 207, and glutamate 208 each contribute to the Mg(2+) site. Residue lysine 205 is modified to N6-carboxylysine. Histidine 297 serves as the catalytic Proton acceptor. Residues arginine 298, histidine 330, and serine 382 each coordinate substrate.

Belongs to the RuBisCO large chain family. Type I subfamily. Heterohexadecamer of 8 large chains and 8 small chains. The cofactor is Mg(2+).

The protein localises to the plastid. It localises to the chloroplast. It carries out the reaction 2 (2R)-3-phosphoglycerate + 2 H(+) = D-ribulose 1,5-bisphosphate + CO2 + H2O. The enzyme catalyses D-ribulose 1,5-bisphosphate + O2 = 2-phosphoglycolate + (2R)-3-phosphoglycerate + 2 H(+). In terms of biological role, ruBisCO catalyzes two reactions: the carboxylation of D-ribulose 1,5-bisphosphate, the primary event in carbon dioxide fixation, as well as the oxidative fragmentation of the pentose substrate in the photorespiration process. Both reactions occur simultaneously and in competition at the same active site. This Pyropia haitanensis (Red seaweed) protein is Ribulose bisphosphate carboxylase large chain (rbcL).